We begin with the raw amino-acid sequence, 125 residues long: Large ribosomal subunit protein bL12 (125 aa).

The protein belongs to the bacterial ribosomal protein bL12 family. Homodimer. Part of the ribosomal stalk of the 50S ribosomal subunit. Forms a multimeric L10(L12)X complex, where L10 forms an elongated spine to which 2 to 4 L12 dimers bind in a sequential fashion. Binds GTP-bound translation factors.

Forms part of the ribosomal stalk which helps the ribosome interact with GTP-bound translation factors. Is thus essential for accurate translation. This chain is Large ribosomal subunit protein bL12, found in Gluconacetobacter diazotrophicus (strain ATCC 49037 / DSM 5601 / CCUG 37298 / CIP 103539 / LMG 7603 / PAl5).